Reading from the N-terminus, the 935-residue chain is Progesterone receptor (935 aa).

Positions 1 to 164 (MTELKAKGPR…PATQGVLSPL (164 aa)) are AF3; mediates transcriptional activation. Positions 1 to 254 (MTELKAKGPR…GGAAAGGGAA (254 aa)) are disordered. The segment at 1–568 (MTELKAKGPR…YSFESLPQKI (568 aa)) is modulating, Pro-Rich. Ser-20 carries the phosphoserine modification. Residues 55 to 59 (LDGLL) carry the LXXL motif 1 motif. Phosphoserine is present on Ser-81. Positions 115–119 (LDTLL) match the LXXL motif 2 motif. Phosphoserine is present on residues Ser-130 and Ser-162. The mediates transcriptional transrepression stretch occupies residues 165 to 305 (MSRSGGKAGD…LATTVMDFIH (141 aa)). The Nuclear localization signal signature appears at 183–187 (KVLPR). Ser-190 and Ser-213 each carry phosphoserine. The segment covering 220–231 (EVEEEDGSESED) has biased composition (acidic residues). A compositionally biased stretch (low complexity) spans 232–246 (SAGPLLKGKPRALGG). Ser-294 is subject to Phosphoserine; by MAPK1. Residues 331-378 (GGAGAASAFAPPRSSPSASSTPVAVGDFPDCAYPPDAEPKDDAYPLYS) form a disordered region. A compositionally biased stretch (low complexity) spans 335 to 350 (AASAFAPPRSSPSASS). Position 345 is a phosphoserine; by MAPK (Ser-345). Residue Lys-388 forms a Glycyl lysine isopeptide (Lys-Gly) (interchain with G-Cter in SUMO); alternate linkage. Residue Lys-388 forms a Glycyl lysine isopeptide (Lys-Gly) (interchain with G-Cter in ubiquitin); alternate linkage. Ser-400 is subject to Phosphoserine; by CDK2. The segment covering 418–430 (PLGPPPPLPPRAP) has biased composition (pro residues). A disordered region spans residues 418–438 (PLGPPPPLPPRAPPTRAGEAA). The AF1; mediates transcriptional activation stretch occupies residues 456 to 548 (STLECILYKA…VYPPYLNYLR (93 aa)). Residue Lys-533 forms a Glycyl lysine isopeptide (Lys-Gly) (interchain with G-Cter in SUMO) linkage. 2 consecutive NR C4-type zinc fingers follow at residues 569-589 (CLICGDEASGCHYGVLTCGSC) and 605-629 (CAGRNDCIVDKIRRKNCPACRLRKC). The nuclear receptor DNA-binding region spans 569–641 (CLICGDEASG…AGMVLGGRKF (73 aa)). Ser-678 carries the phosphoserine modification. The NR LBD domain occupies 681–915 (QDIQLIPPLI…EFPEMMSEVI (235 aa)). The tract at residues 689–935 (LINLLMSIEP…MVKPLLFHKK (247 aa)) is AF2; mediates transcriptional activation.

This sequence belongs to the nuclear hormone receptor family. In terms of assembly, interacts with SMARD1 and UNC45A. Interacts with CUEDC2; the interaction promotes ubiquitination, decreases sumoylation, and represses transcriptional activity. Interacts with PIAS3; the interaction promotes sumoylation of PR in a hormone-dependent manner, inhibits DNA-binding, and alters nuclear export. Interacts with SP1; the interaction requires ligand-induced phosphorylation on Ser-345 by ERK1/2-MAPK. Interacts with PRMT2. Interacts with NCOA2 and NCOA1. Interacts with KLF9. Interacts with GTF2B. Phosphorylated on multiple serine sites. Several of these sites are hormone-dependent. Phosphorylation on Ser-294 is highly hormone-dependent and modulates ubiquitination and sumoylation on Lys-388. Phosphorylation on Ser-102 and Ser-345 also requires induction by hormone. Basal phosphorylation on Ser-81, Ser-162, Ser-190 and Ser-400 is increased in response to progesterone and can be phosphorylated in vitro by the CDK2-A1 complex. Increased levels of phosphorylation on Ser-400 also in the presence of EGF, heregulin, IGF, PMA and FBS. Phosphorylation at this site by CDK2 is ligand-independent, and increases nuclear translocation and transcriptional activity. Phosphorylation at Ser-162 and Ser-294, but not at Ser-190, is impaired during the G(2)/M phase of the cell cycle. Phosphorylation on Ser-345 by ERK1/2 MAPK is required for interaction with SP1. In terms of processing, sumoylation is hormone-dependent and represses transcriptional activity. Sumoylation on all three sites is enhanced by PIAS3. Desumoylated by SENP1. Sumoylation on Lys-388, the main site of sumoylation, is repressed by ubiquitination on the same site, and modulated by phosphorylation at Ser-294. Post-translationally, ubiquitination is hormone-dependent and represses sumoylation on the same site. Promoted by MAPK-mediated phosphorylation on Ser-294. Palmitoylated by ZDHHC7 and ZDHHC21. Palmitoylation is required for plasma membrane targeting and for rapid intracellular signaling via ERK and AKT kinases and cAMP generation.

The protein resides in the nucleus. It is found in the cytoplasm. In terms of biological role, the steroid hormones and their receptors are involved in the regulation of eukaryotic gene expression and affect cellular proliferation and differentiation in target tissues. Transcriptional activator of several progesteron-dependent promoters in a variety of cell types. Involved in activation of SRC-dependent MAPK signaling on hormone stimulation. This is Progesterone receptor (PGR) from Pongo pygmaeus (Bornean orangutan).